The chain runs to 164 residues: Cyclin-dependent kinase inhibitor 1 (164 aa).

N-acetylserine is present on serine 2. Serine 2 is covalently cross-linked (Glycyl serine ester (Ser-Gly) (interchain with G-Cter in ubiquitin)). A C4-type zinc finger spans residues cysteine 13–cysteine 41. The segment at alanine 17–proline 24 is required for binding cyclins. A required for binding CDKs region spans residues phenylalanine 53–proline 58. The segment at leucine 76–proline 164 is disordered. A Phosphothreonine; by LKB1 modification is found at threonine 80. Residue serine 114 is modified to Phosphoserine; by GSK3-beta. Serine 130 is subject to Phosphoserine. The short motif at arginine 140–proline 164 is the PIP-box K+4 motif element. A Nuclear localization signal motif is present at residues lysine 141 to arginine 156. A Phosphothreonine; by PKA, PKB/AKT1, PIM1 and PIM2 modification is found at threonine 145. Serine 146 carries the phosphoserine; by PKC and NUAK1 modification. Residues histidine 152–proline 164 form an interaction with TRIM39 region. The span at serine 153–proline 164 shows a compositional bias: basic residues. At serine 160 the chain carries Phosphoserine; by PKC; in vitro.

It belongs to the CDI family. Interacts with HDAC1; the interaction is prevented by competitive binding of C10orf90/FATS to HDAC1 facilitating acetylation and protein stabilization of CDKN1A/p21. Interacts with MKRN1. Interacts with PSMA3. Interacts with PCNA. Component of the ternary complex, cyclin D-CDK4-CDKN1A. Interacts (via its N-terminal domain) with CDK4; the interaction promotes the assembly of the cyclin D-CDK4 complex, its nuclear translocation and promotes the cyclin D-dependent enzyme activity of CDK4. Binding to CDK2 leads to CDK2/cyclin E inactivation at the G1-S phase DNA damage checkpoint, thereby arresting cells at the G1-S transition during DNA repair. Interacts with PIM1. Interacts with STK11 and NUAK1. Interacts wih DTL. Interacts with isoform 1 and isoform 2 of TRIM39. Interacts with PKP3; the interaction sequesters CDKN1A to the cytoplasm thereby repressing its role as an inhibitor of CDK4- and CDK6-driven RB1 phosphorylation. Phosphorylation of Thr-145 by Akt or of Ser-146 by PKC impairs binding to PCNA. Phosphorylation at Ser-114 by GSK3-beta enhances ubiquitination by the DCX(DTL) complex. Phosphorylation of Thr-145 by PIM2 enhances CDKN1A stability and inhibits cell proliferation. Phosphorylation of Thr-145 by PIM1 results in the relocation of CDKN1A to the cytoplasm and enhanced CDKN1A protein stability. UV radiation-induced phosphorylation at Thr-80 by LKB1 and at Ser-146 by NUAK1 leads to its degradation. In terms of processing, ubiquitinated by MKRN1; leading to polyubiquitination and 26S proteasome-dependent degradation. Ubiquitinated by the DCX(DTL) complex, also named CRL4(CDT2) complex, leading to its degradation during S phase or following UV irradiation. Ubiquitination by the DCX(DTL) complex is essential to control replication licensing and is PCNA-dependent: interacts with PCNA via its PIP-box, while the presence of the containing the 'K+4' motif in the PIP box, recruit the DCX(DTL) complex, leading to its degradation. Ubiquitination at Ser-2 leads to degradation by the proteasome pathway. Ubiquitinated by RNF114; leading to proteasomal degradation. Post-translationally, acetylation leads to protein stability. Acetylated in vitro on Lys-141, Lys-154, Lys-161 and Lys-163. Deacetylation by HDAC1 is prevented by competitive binding of C10orf90/FATS to HDAC1. Expressed in all adult tissues, with 5-fold lower levels observed in the brain.

The protein localises to the cytoplasm. The protein resides in the nucleus. Functionally, plays an important role in controlling cell cycle progression and DNA damage-induced G2 arrest. Involved in p53/TP53 mediated inhibition of cellular proliferation in response to DNA damage. Also involved in p53-independent DNA damage-induced G2 arrest mediated by CREB3L1 in astrocytes and osteoblasts. Binds to and inhibits cyclin-dependent kinase activity, preventing phosphorylation of critical cyclin-dependent kinase substrates and blocking cell cycle progression. Functions in the nuclear localization and assembly of cyclin D-CDK4 complex and promotes its kinase activity towards RB1. At higher stoichiometric ratios, inhibits the kinase activity of the cyclin D-CDK4 complex. Inhibits DNA synthesis by DNA polymerase delta by competing with POLD3 for PCNA binding. Negatively regulates the CDK4- and CDK6-driven phosphorylation of RB1 in keratinocytes, thereby resulting in the release of E2F1 and subsequent transcription of E2F1-driven G1/S phase promoting genes. This chain is Cyclin-dependent kinase inhibitor 1, found in Homo sapiens (Human).